A 235-amino-acid chain; its full sequence is Pro-opiomelanocortin (235 aa).

A signal peptide spans 1 to 26 (MPRFCYSRSGALLLALLLQTSIDVWS). Phenylalanine 87 bears the Phenylalanine amide mark. Residues 88-126 (GPRNSSSAGSAAQRRAEEEAVWGDGSPEPSPREGKRSYS) are disordered. Positions 90-100 (RNSSSAGSAAQ) are enriched in low complexity. N-linked (GlcNAc...) asparagine glycosylation occurs at asparagine 91. Residues 103–121 (AEEEAVWGDGSPEPSPREG) constitute a propeptide that is removed on maturation. Residues 117–126 (SPREGKRSYS) are compositionally biased toward basic and acidic residues. Residue serine 124 is modified to N-acetylserine; in Corticotropin. Valine 136 is subject to Valine amide. An N-linked (GlcNAc...) asparagine glycan is attached at asparagine 152. Serine 154 carries the phosphoserine modification. The segment at 179–210 (ESDAEKDDGPYRVEHFRWSNPPKDKRYGGFMT) is disordered. Residues 185-205 (DDGPYRVEHFRWSNPPKDKRY) show a composition bias toward basic and acidic residues.

Belongs to the POMC family. In terms of processing, specific enzymatic cleavages at paired basic residues yield the different active peptides. As to expression, ACTH and MSH are produced by the pituitary gland.

It localises to the secreted. Its function is as follows. Stimulates the adrenal glands to release cortisol. Functionally, anorexigenic peptide. Increases the pigmentation of skin by increasing melanin production in melanocytes. Increases the pigmentation of skin by increasing melanin production in melanocytes. In terms of biological role, endogenous orexigenic opiate. Its function is as follows. Endogenous opiate. The protein is Pro-opiomelanocortin (Pomc) of Mus musculus (Mouse).